The sequence spans 528 residues: Galactokinase (528 aa).

Residues Arg53, Glu59, His60, and Asp62 each contribute to the alpha-D-galactose site. 4 residues coordinate ATP: Gly165, Gly167, Ser169, and Ser170. Alpha-D-galactose-binding residues include Asn213 and Asp217. Asp217 acts as the Proton acceptor in catalysis. Residues Ser264, Asn265, and Lys266 each coordinate ATP. Tyr274 is a binding site for alpha-D-galactose. Ser381 carries the phosphoserine modification.

Belongs to the GHMP kinase family. GalK subfamily.

The enzyme catalyses alpha-D-galactose + ATP = alpha-D-galactose 1-phosphate + ADP + H(+). It functions in the pathway carbohydrate metabolism; galactose metabolism. Its function is as follows. Galactokinase is a key enzyme in the galactose metabolism where it catalyzes the conversion of alpha-D-galactose to galactose 1-phosphate. Can also induce the transcription of the yeast GAL genes in response to the organism being challenged with galactose as the sole source of carbon. It's striking amino acid sequence similarity to GAL3 might explain its GAL3-like induction activity. The sequence is that of Galactokinase from Saccharomyces cerevisiae (strain ATCC 204508 / S288c) (Baker's yeast).